We begin with the raw amino-acid sequence, 436 residues long: Trigger factor (436 aa).

Residues Gly162 to Pro247 enclose the PPIase FKBP-type domain.

This sequence belongs to the FKBP-type PPIase family. Tig subfamily.

The protein resides in the cytoplasm. The catalysed reaction is [protein]-peptidylproline (omega=180) = [protein]-peptidylproline (omega=0). Its function is as follows. Involved in protein export. Acts as a chaperone by maintaining the newly synthesized protein in an open conformation. Functions as a peptidyl-prolyl cis-trans isomerase. The sequence is that of Trigger factor from Neisseria meningitidis serogroup C (strain 053442).